The following is a 405-amino-acid chain: Mevalonate 3,5-bisphosphate decarboxylase (405 aa).

The protein belongs to the mevalonate 3,5-bisphosphate decarboxylase family. Homodimer.

The enzyme catalyses (R)-3,5-bisphosphomevalonate + H(+) = isopentenyl phosphate + phosphate + CO2. It functions in the pathway isoprenoid biosynthesis; isopentenyl diphosphate biosynthesis via mevalonate pathway. Its function is as follows. Catalyzes the ATP-independent decarboxylation of (R)-mevalonate 3,5-bisphosphate to isopentenyl phosphate. Functions in an alternative mevalonate pathway, only present in extreme acidophiles of the Thermoplasmatales order, which passes through mevalonate 3-phosphate rather than mevalonate 5-phosphate. This is Mevalonate 3,5-bisphosphate decarboxylase from Thermoplasma acidophilum (strain ATCC 25905 / DSM 1728 / JCM 9062 / NBRC 15155 / AMRC-C165).